The following is a 429-amino-acid chain: GDP-fucose protein O-fucosyltransferase 2 (429 aa).

Positions 1-21 (MATLSFVFLLLGAVSWPPASA) are cleaved as a signal peptide. 53 to 57 (PEGFN) serves as a coordination point for GDP-beta-L-fucose. Glu-54 (proton acceptor) is an active-site residue. An intrachain disulfide couples Cys-161 to Cys-192. N-linked (GlcNAc...) asparagine glycosylation is found at Asn-189, Asn-209, and Asn-259. GDP-beta-L-fucose-binding positions include 292 to 294 (HLR), Asp-371, and 388 to 389 (TF). An intrachain disulfide couples Cys-412 to Cys-419.

This sequence belongs to the glycosyltransferase 68 family.

Its subcellular location is the endoplasmic reticulum. It localises to the golgi apparatus. It catalyses the reaction L-seryl-[protein] + GDP-beta-L-fucose = 3-O-(alpha-L-fucosyl)-L-seryl-[protein] + GDP + H(+). The catalysed reaction is L-threonyl-[protein] + GDP-beta-L-fucose = 3-O-(alpha-L-fucosyl)-L-threonyl-[protein] + GDP + H(+). The protein operates within protein modification; protein glycosylation. Functionally, catalyzes the reaction that attaches fucose through an O-glycosidic linkage to a conserved serine or threonine residue in the consensus sequence C1-X-X-S/T-C2 of thrombospondin type I repeats (TSRs) where C1 and C2 are the first and second cysteines of the repeat, respectively. O-fucosylates members of several protein families including the ADAMTS, the thrombospondin (TSP) and spondin families. Required for the proper secretion of ADAMTS family members such as ADAMTSL1 and ADAMTS13. The O-fucosylation of TSRs is also required for restricting epithelial to mesenchymal transition (EMT), maintaining the correct patterning of mesoderm and localization of the definite endoderm. This is GDP-fucose protein O-fucosyltransferase 2 (POFUT2) from Pan troglodytes (Chimpanzee).